Consider the following 124-residue polypeptide: Protein MGF 110-4L-B (124 aa).

A signal peptide spans 1-18 (MLVIFLGILGLLANQVLG). Residue N64 is glycosylated (N-linked (GlcNAc...) asparagine; by host). The short motif at 121-124 (KEDL) is the Prevents secretion from ER element.

Belongs to the asfivirus MGF 110 family.

It is found in the virion. Its subcellular location is the host endoplasmic reticulum-Golgi intermediate compartment. Causes the redistribution of lumenal ER protein to an enlarged ERGIC compartment. This African swine fever virus (isolate Portugal/Lis 57/1957) (ASFV) protein is Protein MGF 110-4L-B.